The sequence spans 96 residues: Large ribosomal subunit protein uL23 (96 aa).

Belongs to the universal ribosomal protein uL23 family. Part of the 50S ribosomal subunit. Contacts protein L29, and trigger factor when it is bound to the ribosome.

One of the early assembly proteins it binds 23S rRNA. One of the proteins that surrounds the polypeptide exit tunnel on the outside of the ribosome. Forms the main docking site for trigger factor binding to the ribosome. This is Large ribosomal subunit protein uL23 from Onion yellows phytoplasma (strain OY-M).